We begin with the raw amino-acid sequence, 463 residues long: 23S rRNA (uracil(1939)-C(5))-methyltransferase RlmD (463 aa).

Positions 6 to 76 constitute a TRAM domain; that stretch reads KSRKPQQPEY…KRLEEAEMVE (71 aa). C90, C96, C99, and C178 together coordinate [4Fe-4S] cluster. Positions 288, 317, 322, 341, 368, and 389 each coordinate S-adenosyl-L-methionine. C415 functions as the Nucleophile in the catalytic mechanism.

It belongs to the class I-like SAM-binding methyltransferase superfamily. RNA M5U methyltransferase family. RlmD subfamily.

The enzyme catalyses uridine(1939) in 23S rRNA + S-adenosyl-L-methionine = 5-methyluridine(1939) in 23S rRNA + S-adenosyl-L-homocysteine + H(+). Its function is as follows. Catalyzes the formation of 5-methyl-uridine at position 1939 (m5U1939) in 23S rRNA. This chain is 23S rRNA (uracil(1939)-C(5))-methyltransferase RlmD, found in Acinetobacter baumannii (strain AYE).